The chain runs to 1776 residues: MDSDGVSHAPSVAQSAPSWNPALRHEKDHAPAATAKLPSQVKPESSSEEESEEEEEEEDDDEDDEEEEDSDEDDDEEENAPAATAVSGPTPIAVLDGAQDSEDESESPSELTKSTPIVQASQGSMEKRVEVIGAEEEALVNAAQALNISGNPATGQTKAESTDEAESDEDSEEEESSDEEAAAAGEHQADNYEHQGEATALEEAVNESVRVPLVDDAAPESDDWGDSGDPFEIGGLQQDPSLQTPHAEAAGTTVGDDVIGNTTVGGNAGDDLDWGNTEEEDFFGVVANKPVESVEPAQPTQSPGAHVVQAQDAAPAKSEWDLDLDLDEDFLPDNEDGPVIELSDDEGFLDDEPTAPVEQPASTGIGGASRYAPQAAQTSHSVASPYAAPGQFANPPQGSMTRSITTPAGGVYNGYGQNVAYQQQQAARPTMPTSAQSYADKSKGGYASPYDLPDDVVTTRKRTTPRPVISATQPAIPPPRTSSMSSSSAPPRPLPPSNASVASLSPPPSGHSMQGQMTGFPPAVPPKSAPPAKAPSSDFFAELPVTSKPKPPGRYTPQPAAAAQSPSLQGPPQFTQKERTASWSSLRNEVLPDTVGAQPHLRQPEQLPMFPSQPSVPTRQNSLPIPQSTAPPPSSRYSPAPPSVPANNARYSPAPPTAQGGANSRYSPAPPGSQGAAHARYVSEPPTGPARTPSQTYAPRTSSPLAFHSTPHHQENTTNVSEQQLPGHHVTQSADGVPRAPFRSPLEGVSEALELDSTSSDRPPTTARSDTPPPTRSSTSSAIGSPRKKGNYTPQYQPMNPMAPSRSLSQSPATGMKQPGPMYGAAPIAASYGTHIQEATTTNSIPHRRQASLNYECIVPEDERAVDPLQRYKGHPVFAWGLGGTIVTTFPKQIPRYGGGMTAPMVKCSPGEIKIQSVKEIIPLAEDLAKFPGPLKAKSKKKDVLSWLTKRLESLELQIKDPNTEHTLSVDELKRLEEKTLLLKLLQFLVENDGRLEGEAANAAFKNLFSPEADNASDAEGSFSTAADIVGRSRSNTVNTPAEPIDARAIEDLQKMLARGEREKAVWHAVDQRLWGHAMLLSSTLSKDIWKQVVQEFVRNEVKKVGRSNQALAVLYEVFAGNHEDCIDELVPASARAGFQMVSTDGAGAALNAQQGLDKWRETIALILNNRSEGDVSALLSLGKLLSQYGRVEAAHICFILGRSVAHVSGVDDALADLVLIGIDHKQHPTELGVDLEPILLTEVYEFALSLSAQVNSHIMPHLQNYKLAHAYQLAEHGYRTEAQAYCDAIAAAMKATTRTSPYYNLSFIASLDDLSKRLSQSPKDSSSSWISKPSMDRVSTSLMSKFNSFIAGEDDGPSSNAATGTEVGPFAKITGDSPGLTPSHSNADLYADCFCKFKICSFKYIRTKDVIRATEIALRAAGQTFYGVERQPPPQPQLSPPSQRTQAKMQSYSPLRAEHNVSQPSYGNPYMPTPPNEETASASSFGGYQPQQGTGHSFDDPAPPTSSFDEPSYQPYNPDADDMEEDNKPKKKSIMDDDDDDLVARAAALKIGSGSNSKSDADKKADEAFRKAAEADAKRDKENAAKKAGGGWLSGWFKKDPNAAPGPIKAKLGEESSFYYDPDLGKWVNKKGGSSEPERATATPPPPKGPPMGARSASGGMPPPSGPPPSGAGLMKPPTSAPLRSSSMPPPMGLPGSRSSTPGLPSDNEGGPKPPTLARPSFGAASGPPSRPGTGMSNASSIDDLLGAPQARKGAGAKKKKGGRYVDVFPQGQAS.

Disordered stretches follow at residues 1 to 129 (MDSD…EKRV), 143 to 277 (AQAL…WGNT), 292 to 817 (ESVE…TGMK), and 1428 to 1776 (GVER…GQAS). Acidic residues predominate over residues 46 to 79 (SSEEESEEEEEEEDDDEDDEEEEDSDEDDDEEEN). Composition is skewed to polar residues over residues 111 to 124 (LTKS…SQGS) and 144 to 158 (QALN…GQTK). Over residues 162–181 (TDEAESDEDSEEEESSDEEA) the composition is skewed to acidic residues. Basic and acidic residues predominate over residues 187–196 (HQADNYEHQG). 2 stretches are compositionally biased toward acidic residues: residues 217-226 (AAPESDDWGD) and 321-353 (DLDL…DDEP). Composition is skewed to polar residues over residues 394 to 406 (NPPQ…SITT) and 415 to 439 (YGQN…QSYA). Pro residues predominate over residues 522–533 (PAVPPKSAPPAK). Positions 557–573 (PQPAAAAQSPSLQGPPQ) are enriched in low complexity. A compositionally biased stretch (polar residues) spans 612 to 627 (SQPSVPTRQNSLPIPQ). Residues 629–644 (TAPPPSSRYSPAPPSV) show a composition bias toward pro residues. Composition is skewed to polar residues over residues 692-704 (TPSQ…TSSP) and 716-734 (NTTN…TQSA). Low complexity predominate over residues 761–782 (DRPPTTARSDTPPPTRSSTSSA). 2 stretches are compositionally biased toward polar residues: residues 1445 to 1454 (RTQAKMQSYS) and 1477 to 1496 (NEET…QGTG). The span at 1560–1586 (SDADKKADEAFRKAAEADAKRDKENAA) shows a compositional bias: basic and acidic residues. Over residues 1652–1661 (PMGARSASGG) the composition is skewed to low complexity. Residues 1662 to 1671 (MPPPSGPPPS) show a composition bias toward pro residues.

Belongs to the SEC16 family.

It localises to the endoplasmic reticulum membrane. In terms of biological role, involved in the initiation of assembly of the COPII coat required for the formation of transport vesicles from the endoplasmic reticulum (ER) and the selection of cargo molecules. Also involved in autophagy. In Phaeosphaeria nodorum (strain SN15 / ATCC MYA-4574 / FGSC 10173) (Glume blotch fungus), this protein is COPII coat assembly protein SEC16 (SEC16).